The chain runs to 354 residues: Uroporphyrinogen decarboxylase (354 aa).

Substrate-binding positions include Arg-27–Arg-31, Asp-77, Tyr-154, Thr-209, and His-327.

The protein belongs to the uroporphyrinogen decarboxylase family. In terms of assembly, homodimer.

It is found in the cytoplasm. It catalyses the reaction uroporphyrinogen III + 4 H(+) = coproporphyrinogen III + 4 CO2. Its pathway is porphyrin-containing compound metabolism; protoporphyrin-IX biosynthesis; coproporphyrinogen-III from 5-aminolevulinate: step 4/4. Catalyzes the decarboxylation of four acetate groups of uroporphyrinogen-III to yield coproporphyrinogen-III. This chain is Uroporphyrinogen decarboxylase, found in Pseudomonas putida (strain W619).